Reading from the N-terminus, the 52-residue chain is Conotoxin reg3h (52 aa).

Residue A1 is a signal peptide. A propeptide spanning residues 2-33 (LPLDGDQPADQPAERMQDISPELNPLFHPVKR) is cleaved from the precursor. 3 disulfide bridges follow: C35–C49, C36–C47, and C41–C50. 4-hydroxyproline occurs at positions 38, 48, and 51. N52 carries the post-translational modification Asparagine amide.

As to expression, expressed by the venom duct.

The protein resides in the secreted. This chain is Conotoxin reg3h, found in Conus regius (Crown cone).